Here is a 393-residue protein sequence, read N- to C-terminus: Stimulated by retinoic acid gene 8 protein (393 aa).

The span at 1–11 shows a compositional bias: polar residues; that stretch reads MATPGEGNQPS. Residues 1 to 25 form a disordered region; that stretch reads MATPGEGNQPSDDGAPQPLAQLQKL. A Nuclear localization signal (NLS) motif is present at residues 28-33; that stretch reads RVVRRR. Residues 66-95 are a coiled coil; it reads QVLNRTKIHIQEQEESLDKLLKLKASFNLQ. Positions 124–201 are disordered; that stretch reads FLQDSPPEWF…EEKKVDLSHS (78 aa). Acidic residues predominate over residues 141 to 192; that stretch reads DAEEEGEEEGEEEGEEGEEEEEGDEEGEEEEENGEEREVEEYQEEEEEEEEE. Positions 209–218 match the Nuclear export signal (NES) motif; the sequence is LMEFERYLNF.

In terms of assembly, interacts with XPO1. Interacts with MEIOSIN. Phosphorylated in P19 EC cells. In terms of tissue distribution, expressed exclusively in premeiotic germ cells in both sexes. In females, is expressed in the embryonic ovary. In males, is expressed in pubertal and adult testes, in premeiotic spermatogenic cells. Expressed by some type A and B spermatogonia, preleptotene spermatocytes, and early leptotene spermatocytes (at protein level). Expression begins in late undifferentiated spermatogonia and persists during differentiating spermatogonia (at protein level).

The protein localises to the cytoplasm. The protein resides in the nucleus. In terms of biological role, meiosis-inducer required for the transition into meiosis for both female and male germ cells. In female germ cells, acts downstream of ZGLP1 as a key effector of the meiotic program: required for premeiotic DNA replication and subsequent events in meiotic prophase. During spermatogenesis, next to its role in meiotic initiation, promotes (but is not required for) spermatogonial differentiation. In complex with MEIOSIN, directly activates the transcription of a subset of critical meiotic genes playing a central role in cell-cycle switching from mitosis to meiosis. The polypeptide is Stimulated by retinoic acid gene 8 protein (Mus musculus (Mouse)).